The following is a 305-amino-acid chain: tRNA uridine(34) hydroxylase (305 aa).

Positions 126–220 (CDPEVTVIDT…YLEEVPAQES (95 aa)) constitute a Rhodanese domain. Cysteine 180 functions as the Cysteine persulfide intermediate in the catalytic mechanism.

This sequence belongs to the TrhO family.

It catalyses the reaction uridine(34) in tRNA + AH2 + O2 = 5-hydroxyuridine(34) in tRNA + A + H2O. In terms of biological role, catalyzes oxygen-dependent 5-hydroxyuridine (ho5U) modification at position 34 in tRNAs. This is tRNA uridine(34) hydroxylase from Nostoc punctiforme (strain ATCC 29133 / PCC 73102).